We begin with the raw amino-acid sequence, 364 residues long: Biotin synthase (364 aa).

Residues 14–36 (DTIPPGTETPYASPSHARTEEAP) form a disordered region. Positions 70-308 (RKGPLATTCG…QRDILVCGGR (239 aa)) constitute a Radical SAM core domain. Residues C88, C92, and C95 each coordinate [4Fe-4S] cluster. [2Fe-2S] cluster-binding residues include C164 and C233.

The protein belongs to the radical SAM superfamily. Biotin synthase family. As to quaternary structure, homodimer. [4Fe-4S] cluster serves as cofactor. It depends on [2Fe-2S] cluster as a cofactor.

The catalysed reaction is (4R,5S)-dethiobiotin + (sulfur carrier)-SH + 2 reduced [2Fe-2S]-[ferredoxin] + 2 S-adenosyl-L-methionine = (sulfur carrier)-H + biotin + 2 5'-deoxyadenosine + 2 L-methionine + 2 oxidized [2Fe-2S]-[ferredoxin]. The protein operates within cofactor biosynthesis; biotin biosynthesis; biotin from 7,8-diaminononanoate: step 2/2. Its function is as follows. Catalyzes the conversion of dethiobiotin (DTB) to biotin by the insertion of a sulfur atom into dethiobiotin via a radical-based mechanism. In Nitratidesulfovibrio vulgaris (strain DSM 19637 / Miyazaki F) (Desulfovibrio vulgaris), this protein is Biotin synthase.